We begin with the raw amino-acid sequence, 21 residues long: Peptidyl-prolyl cis-trans isomerase (21 aa).

Residues Glu1–Asn21 are disordered.

It belongs to the cyclophilin-type PPIase family. PPIase A subfamily.

It carries out the reaction [protein]-peptidylproline (omega=180) = [protein]-peptidylproline (omega=0). Functionally, PPIases accelerate the folding of proteins. It catalyzes the cis-trans isomerization of proline imidic peptide bonds in oligopeptides. This Naegleria fowleri (Brain eating amoeba) protein is Peptidyl-prolyl cis-trans isomerase.